The following is a 452-amino-acid chain: Bone morphogenetic protein 5 (452 aa).

A signal peptide spans 1–25; the sequence is MHWTVFLLRGIVGFLWSGWVQVGYA. Positions 26–314 are excised as a propeptide; sequence KGGLGDNHVH…ASEVLLRSVR (289 aa). N-linked (GlcNAc...) asparagine glycans are attached at residues Asn209, Asn325, Asn343, and Asn393. Residues 316-345 are disordered; it reads ASKRKNQNRNKSNSHQDPSRMPSAGDYNTS. Cystine bridges form between Cys351–Cys417, Cys380–Cys449, and Cys384–Cys451.

This sequence belongs to the TGF-beta family. Interacts with ERFE; the interaction inhibits BMP-induced transcription of HAMP.

The protein resides in the secreted. Growth factor of the TGF-beta superfamily that plays essential roles in many developmental processes, including cartilage and bone formation or neurogenesis. Initiates the canonical BMP signaling cascade by associating with type I receptor BMPR1A and type II receptor BMPR2. In turn, BMPR1A propagates signal by phosphorylating SMAD1/5/8 that travel to the nucleus and act as activators and repressors of transcription of target genes. Can also signal through non-canonical pathway such as MAPK p38 signaling cascade to promote chondrogenic differentiation. Promotes the expression of HAMP, this is repressed by its interaction with ERFE. The protein is Bone morphogenetic protein 5 (Bmp5) of Mus musculus (Mouse).